We begin with the raw amino-acid sequence, 238 residues long: ATP-dependent dethiobiotin synthetase BioD (238 aa).

12 to 17 (EVGKTV) contacts ATP. Threonine 16 is a Mg(2+) binding site. Lysine 37 is an active-site residue. A substrate-binding site is contributed by threonine 41. Residues aspartate 50, 109–112 (EGAG), 170–171 (GS), and 200–202 (PAG) each bind ATP. Mg(2+)-binding residues include aspartate 50 and glutamate 109.

Belongs to the dethiobiotin synthetase family. Homodimer. Mg(2+) is required as a cofactor.

It localises to the cytoplasm. It catalyses the reaction (7R,8S)-7,8-diammoniononanoate + CO2 + ATP = (4R,5S)-dethiobiotin + ADP + phosphate + 3 H(+). Its pathway is cofactor biosynthesis; biotin biosynthesis; biotin from 7,8-diaminononanoate: step 1/2. Its function is as follows. Catalyzes a mechanistically unusual reaction, the ATP-dependent insertion of CO2 between the N7 and N8 nitrogen atoms of 7,8-diaminopelargonic acid (DAPA, also called 7,8-diammoniononanoate) to form a ureido ring. This chain is ATP-dependent dethiobiotin synthetase BioD, found in Parafrankia sp. (strain EAN1pec).